Here is a 110-residue protein sequence, read N- to C-terminus: UPF0339 protein YegP (110 aa).

Repeat copies occupy residues 10 to 58 (SSDN…RYEK) and 61 to 109 (ASNG…VKDN).

The protein belongs to the UPF0339 family. Duplicated subfamily.

This Shigella flexneri protein is UPF0339 protein YegP (yegP).